A 207-amino-acid chain; its full sequence is N-(5'-phosphoribosyl)anthranilate isomerase (207 aa).

This sequence belongs to the TrpF family.

The catalysed reaction is N-(5-phospho-beta-D-ribosyl)anthranilate = 1-(2-carboxyphenylamino)-1-deoxy-D-ribulose 5-phosphate. It participates in amino-acid biosynthesis; L-tryptophan biosynthesis; L-tryptophan from chorismate: step 3/5. The polypeptide is N-(5'-phosphoribosyl)anthranilate isomerase (Legionella pneumophila (strain Corby)).